The following is a 626-amino-acid chain: MADQRMDISSTISDFMSPGPTDLLSSSLGTSGVDCNRKRKGSSTDYQESMDTDKDDPHGRLEYTEHQGRIKNAREAHSQIEKRRRDKMNSFIDELASLVPTCNAMSRKLDKLTVLRMAVQHMKTLRGATNPYTEANYKPTFLSDDELKHLILRAADGFLFVVGCDRGKILFVSESVFKILNYSQNDLIGQSLFDYLHPKDIAKVKEQLSSSDTAPRERLIDAKTGLPVKTDITPGPSRLCSGARRSFFCRMKCNRPSVKVEDKDFPSTCSKKKADRKSFCTIHSTGYLKSWPPTKMGLDEDNEADSEGCNLSCLVAIGRLHSHVVPQPAGGDIKVKSTEYVSRHAIDGKFVFVDQRATAILAYLPQELLGTSCYEYFHQDDIGHLAECHRQVLQTREKITTNCYKFKIKDGSFITLRSRWFSFMNPWTKEVEYIVSTNTVVLANVLEGGDPTFPQLTASPHSMDSMLPSGEGGPKKTHPTVPGIPGGTRAGAGKIGRMIAEEIMEIHRIRGSSPSSCGSSPLNITSTPPPDASSPGGKKILNGGTPDIPSSGLLPGQAQENPGYPYSDSSSILGENPHISIDMIDNDQGSSSPSNDEAAMAVIMSLLEADAGLGGPVDFSDLPWPL.

A disordered region spans residues 1-60 (MADQRMDISSTISDFMSPGPTDLLSSSLGTSGVDCNRKRKGSSTDYQESMDTDKDDPHGR). Phosphoserine; by GSK3-beta is present on S17. The span at 17–32 (SPGPTDLLSSSLGTSG) shows a compositional bias: low complexity. T21 carries the post-translational modification Phosphothreonine; by GSK3-beta. Residues 36-41 (NRKRKG) carry the Nuclear localization signal motif. Positions 51-60 (DTDKDDPHGR) are enriched in basic and acidic residues. The bHLH domain occupies 72 to 125 (NAREAHSQIEKRRRDKMNSFIDELASLVPTCNAMSRKLDKLTVLRMAVQHMKTL). S78 is subject to Phosphoserine. S90 is modified (phosphoserine; by CK2). The Nuclear export signal 1 signature appears at 142 to 152 (LSDDELKHLIL). A PAS 1 domain is found at 143-215 (SDDELKHLIL…EQLSSSDTAP (73 aa)). K252 participates in a covalent cross-link: Glycyl lysine isopeptide (Lys-Gly) (interchain with G-Cter in SUMO2 and SUMO3). K259 participates in a covalent cross-link: Glycyl lysine isopeptide (Lys-Gly) (interchain with G-Cter in SUMO); alternate. A Glycyl lysine isopeptide (Lys-Gly) (interchain with G-Cter in SUMO2); alternate cross-link involves residue K259. The PAS 2 domain maps to 326-396 (PQPAGGDIKV…ECHRQVLQTR (71 aa)). Positions 361–369 (LAYLPQELL) match the Nuclear export signal 2 motif. Positions 402–445 (NCYKFKIKDGSFITLRSRWFSFMNPWTKEVEYIVSTNTVVLANV) constitute a PAC domain. Disordered stretches follow at residues 458–493 (ASPHSMDSMLPSGEGGPKKTHPTVPGIPGGTRAGAG) and 511–596 (GSSP…PSND). The span at 484–493 (IPGGTRAGAG) shows a compositional bias: gly residues. The interval 508-588 (RIRGSSPSSC…ISIDMIDNDQ (81 aa)) is interaction with CIART. Low complexity predominate over residues 511–521 (GSSPSSCGSSP). N6-acetyllysine is present on K538.

As to quaternary structure, component of the circadian clock oscillator which includes the CRY1/2 proteins, CLOCK or NPAS2, BMAL1 or BMAL2, CSNK1D and/or CSNK1E, TIMELESS and the PER1/2/3 proteins. Forms a heterodimer with CLOCK. The CLOCK-BMAL1 heterodimer is required for E-box-dependent transactivation, for CLOCK nuclear translocation and degradation, and, for phosphorylation of both CLOCK and BMAL1. Part of a nuclear complex which also includes RACK1 and PRKCA; RACK1 and PRKCA are recruited to the complex in a circadian manner. Interacts with NPAS2. Interacts with EZH2. Interacts with SUMO3. Interacts with SIRT1. Interacts with AHR. Interacts with ID1, ID2 and ID3. Interacts with DDX4. Interacts with OGT. Interacts with EED and SUZ12. Interacts with MTA1. Interacts with CIART. Interacts with HSP90. Interacts with KAT2B and EP300. Interacts with BHLHE40/DEC1 and BHLHE41/DEC2. Interacts with RELB and the interaction is enhanced in the presence of CLOCK. Interacts with PER1, PER2, CRY1 and CRY2 and this interaction requires a translocation to the nucleus. Interaction of the CLOCK-BMAL1 heterodimer with PER or CRY inhibits transcription activation. Interaction of the CLOCK-BMAL1 with CRY1 is independent of DNA but with PER2 is off DNA. The CLOCK-BMAL1 heterodimer interacts with GSK3B. Interacts with KDM5A. Interacts with KMT2A; in a circadian manner. Interacts with UBE3A. Interacts with PRKCG. Interacts with MAGEL2. Interacts with NCOA2. Interacts with THRAP3. The CLOCK-BMAL1 heterodimer interacts with PASD1. Interacts with PASD1. Interacts with USP9X. Interacts with PIWIL2 (via PIWI domain). Interacts with HDAC3. Interacts with HNF4A. Post-translationally, ubiquitinated, leading to its proteasomal degradation. Deubiquitinated by USP9X. In terms of processing, O-glycosylated; contains O-GlcNAc. O-glycosylation by OGT prevents protein degradation by inhibiting ubiquitination. It also stabilizes the CLOCK-BMAL1 heterodimer thereby increasing CLOCK-BMAL1-mediated transcription of genes in the negative loop of the circadian clock such as PER1/2/3 and CRY1/2. Acetylated on Lys-538 by CLOCK during the repression phase of the circadian cycle. Acetylation facilitates recruitment of CRY1 protein and initiates the repression phase of the circadian cycle. Acetylated at Lys-538 by KAT5 during the activation phase of the cycle, leading to recruitment of the positive transcription elongation factor b (P-TEFb) and BRD4, followed by productive elongation of circadian transcripts. Deacetylated by SIRT1, which may result in decreased protein stability. Post-translationally, phosphorylated upon dimerization with CLOCK. Phosphorylation enhances the transcriptional activity, alters the subcellular localization and decreases the stability of the CLOCK-BMAL1 heterodimer by promoting its degradation. Phosphorylation shows circadian variations in the liver with a peak between CT10 to CT14. Phosphorylation at Ser-90 by CK2 is essential for its nuclear localization, its interaction with CLOCK and controls CLOCK nuclear entry. Dephosphorylation at Ser-78 is important for dimerization with CLOCK and transcriptional activity. In terms of processing, sumoylated on Lys-259 upon dimerization with CLOCK. Predominantly conjugated to poly-SUMO2/3 rather than SUMO1 and the level of these conjugates undergo rhythmic variation, peaking at CT9-CT12. Sumoylation localizes it exclusively to the PML body and promotes its ubiquitination in the PML body, ubiquitin-dependent proteasomal degradation and the transcriptional activity of the CLOCK-BMAL1 heterodimer. Undergoes lysosome-mediated degradation in a time-dependent manner in the liver. Highly expressed in the suprachiasmatic nucleus (SCN). Also expressed in all other tissues examined including kidney, intestine, liver, heart, spleen, brain, muscle, lung, harderian gland and eye. Low expression in kidney and spleen.

The protein resides in the nucleus. The protein localises to the cytoplasm. It is found in the PML body. In terms of biological role, transcriptional activator which forms a core component of the circadian clock. The circadian clock, an internal time-keeping system, regulates various physiological processes through the generation of approximately 24 hour circadian rhythms in gene expression, which are translated into rhythms in metabolism and behavior. It is derived from the Latin roots 'circa' (about) and 'diem' (day) and acts as an important regulator of a wide array of physiological functions including metabolism, sleep, body temperature, blood pressure, endocrine, immune, cardiovascular, and renal function. Consists of two major components: the central clock, residing in the suprachiasmatic nucleus (SCN) of the brain, and the peripheral clocks that are present in nearly every tissue and organ system. Both the central and peripheral clocks can be reset by environmental cues, also known as Zeitgebers (German for 'timegivers'). The predominant Zeitgeber for the central clock is light, which is sensed by retina and signals directly to the SCN. The central clock entrains the peripheral clocks through neuronal and hormonal signals, body temperature and feeding-related cues, aligning all clocks with the external light/dark cycle. Circadian rhythms allow an organism to achieve temporal homeostasis with its environment at the molecular level by regulating gene expression to create a peak of protein expression once every 24 hours to control when a particular physiological process is most active with respect to the solar day. Transcription and translation of core clock components (CLOCK, NPAS2, BMAL1, BMAL2, PER1, PER2, PER3, CRY1 and CRY2) plays a critical role in rhythm generation, whereas delays imposed by post-translational modifications (PTMs) are important for determining the period (tau) of the rhythms (tau refers to the period of a rhythm and is the length, in time, of one complete cycle). A diurnal rhythm is synchronized with the day/night cycle, while the ultradian and infradian rhythms have a period shorter and longer than 24 hours, respectively. Disruptions in the circadian rhythms contribute to the pathology of cardiovascular diseases, cancer, metabolic syndromes and aging. A transcription/translation feedback loop (TTFL) forms the core of the molecular circadian clock mechanism. Transcription factors, CLOCK or NPAS2 and BMAL1 or BMAL2, form the positive limb of the feedback loop, act in the form of a heterodimer and activate the transcription of core clock genes and clock-controlled genes (involved in key metabolic processes), harboring E-box elements (5'-CACGTG-3') within their promoters. The core clock genes: PER1/2/3 and CRY1/2 which are transcriptional repressors form the negative limb of the feedback loop and interact with the CLOCK|NPAS2-BMAL1|BMAL2 heterodimer inhibiting its activity and thereby negatively regulating their own expression. This heterodimer also activates nuclear receptors NR1D1/2 and RORA/B/G, which form a second feedback loop and which activate and repress BMAL1 transcription, respectively. BMAL1 positively regulates myogenesis and negatively regulates adipogenesis via the transcriptional control of the genes of the canonical Wnt signaling pathway. Plays a role in normal pancreatic beta-cell function; regulates glucose-stimulated insulin secretion via the regulation of antioxidant genes NFE2L2/NRF2 and its targets SESN2, PRDX3, CCLC and CCLM. Negatively regulates the mTORC1 signaling pathway; regulates the expression of MTOR and DEPTOR. Controls diurnal oscillations of Ly6C inflammatory monocytes; rhythmic recruitment of the PRC2 complex imparts diurnal variation to chemokine expression that is necessary to sustain Ly6C monocyte rhythms. Regulates the expression of HSD3B2, STAR, PTGS2, CYP11A1, CYP19A1 and LHCGR in the ovary and also the genes involved in hair growth. Plays an important role in adult hippocampal neurogenesis by regulating the timely entry of neural stem/progenitor cells (NSPCs) into the cell cycle and the number of cell divisions that take place prior to cell-cycle exit. Regulates the circadian expression of CIART and KLF11. The CLOCK-BMAL1 heterodimer regulates the circadian expression of SERPINE1/PAI1, VWF, B3, CCRN4L/NOC, NAMPT, DBP, MYOD1, PPARGC1A, PPARGC1B, SIRT1, GYS2, F7, NGFR, GNRHR, BHLHE40/DEC1, ATF4, MTA1, KLF10 and also genes implicated in glucose and lipid metabolism. Promotes rhythmic chromatin opening, regulating the DNA accessibility of other transcription factors. The NPAS2-BMAL1 heterodimer positively regulates the expression of MAOA, F7 and LDHA and modulates the circadian rhythm of daytime contrast sensitivity by regulating the rhythmic expression of adenylate cyclase type 1 (ADCY1) in the retina. The preferred binding motif for the CLOCK-BMAL1 heterodimer is 5'-CACGTGA-3', which contains a flanking adenine nucleotide at the 3-prime end of the canonical 6-nucleotide E-box sequence. CLOCK specifically binds to the half-site 5'-CAC-3', while BMAL1 binds to the half-site 5'-GTGA-3'. The CLOCK-BMAL1 heterodimer also recognizes the non-canonical E-box motifs 5'-AACGTGA-3' and 5'-CATGTGA-3'. Essential for the rhythmic interaction of CLOCK with ASS1 and plays a critical role in positively regulating CLOCK-mediated acetylation of ASS1. Plays a role in protecting against lethal sepsis by limiting the expression of immune checkpoint protein CD274 in macrophages in a PKM2-dependent manner. Regulates the diurnal rhythms of skeletal muscle metabolism via transcriptional activation of genes promoting triglyceride synthesis (DGAT2) and metabolic efficiency (COQ10B). This Nannospalax galili (Northern Israeli blind subterranean mole rat) protein is Basic helix-loop-helix ARNT-like protein 1 (Bmal1).